A 223-amino-acid chain; its full sequence is Sigma non-opioid intracellular receptor 1 (223 aa).

Residues 1–9 are Lumenal-facing; sequence MQWAVGRRW. The targeting to endoplasmic reticulum-associated lipid droplets stretch occupies residues 2–8; sequence QWAVGRR. The helical transmembrane segment at 10-30 threads the bilayer; sequence LWVALFLAAVAVLTQIVWLWL. Topologically, residues 31–223 are cytoplasmic; sequence GTQNFVFQRE…LTTYLFGQDP (193 aa). The important for ligand-binding stretch occupies residues 99 to 106; the sequence is SLSEYVLL. Positions 177-223 are C-terminal hydrophobic region; that stretch reads VIPSTLGFALADTVFSTQDFLTLFYTLRVYARALQLELTTYLFGQDP.

It belongs to the ERG2 family. Homotrimer. Forms a ternary complex with ANK2 and ITPR3. The complex is disrupted by agonists. Interacts with KCNA4. Interacts with KCNA2; cocaine consumption leads to increased interaction. Interacts with RNF112 in an oxidative stress-regulated manner. In terms of tissue distribution, ubiquitously expressed with higher expression in liver, kidney and steroid-producing tissues such as placenta, ovary and adrenal gland.

It localises to the nucleus inner membrane. The protein resides in the nucleus outer membrane. Its subcellular location is the nucleus envelope. It is found in the cytoplasmic vesicle. The protein localises to the endoplasmic reticulum membrane. It localises to the membrane. The protein resides in the lipid droplet. Its subcellular location is the cell junction. It is found in the cell membrane. The protein localises to the cell projection. It localises to the growth cone. The protein resides in the postsynaptic density membrane. In terms of biological role, functions in lipid transport from the endoplasmic reticulum and is involved in a wide array of cellular functions probably through regulation of the biogenesis of lipid microdomains at the plasma membrane. Involved in the regulation of different receptors it plays a role in BDNF signaling and EGF signaling. Also regulates ion channels like the potassium channel and could modulate neurotransmitter release. Plays a role in calcium signaling through modulation together with ANK2 of the ITP3R-dependent calcium efflux at the endoplasmic reticulum. Plays a role in several other cell functions including proliferation, survival and death. Originally identified for its ability to bind various psychoactive drugs it is involved in learning processes, memory and mood alteration. Necessary for proper mitochondrial axonal transport in motor neurons, in particular the retrograde movement of mitochondria. Plays a role in protecting cells against oxidative stress-induced cell death via its interaction with RNF112. This Cavia porcellus (Guinea pig) protein is Sigma non-opioid intracellular receptor 1 (SIGMAR1).